A 276-amino-acid chain; its full sequence is Diaminopimelate epimerase (276 aa).

Positions 13, 46, and 66 each coordinate substrate. Catalysis depends on Cys75, which acts as the Proton donor. Substrate-binding positions include 76–77 (GN), Asn159, Asn192, and 210–211 (ER). The active-site Proton acceptor is the Cys219. 220-221 (GT) contributes to the substrate binding site.

The protein belongs to the diaminopimelate epimerase family. Homodimer.

It is found in the cytoplasm. The catalysed reaction is (2S,6S)-2,6-diaminopimelate = meso-2,6-diaminopimelate. The protein operates within amino-acid biosynthesis; L-lysine biosynthesis via DAP pathway; DL-2,6-diaminopimelate from LL-2,6-diaminopimelate: step 1/1. Functionally, catalyzes the stereoinversion of LL-2,6-diaminopimelate (L,L-DAP) to meso-diaminopimelate (meso-DAP), a precursor of L-lysine and an essential component of the bacterial peptidoglycan. This Stutzerimonas stutzeri (strain A1501) (Pseudomonas stutzeri) protein is Diaminopimelate epimerase.